We begin with the raw amino-acid sequence, 72 residues long: Endolysin PlyC, small cell-wall binding subunit (72 aa).

In terms of assembly, homooctamer. Part of the PlyC holoenzyme, which is composed of 1 PLYCA and 8 PLYCB assembled into a ring structure.

Component of the endolysin PlyC that degrades the host peptidoglycans and participates with the holin protein in the sequential events which lead to the programmed host cell lysis releasing the mature viral particles. Once the holin has permeabilized the host cell membrane, the endolysin can reach the periplasm and breaking down the peptidoglycan layer. The small subunit PlyCB is responsible for the specific binding of the endolysin to the host cell-wall, probably to the rhamnose of group A streptococcal carbohydrates. PlyCB is essential for lytic activity, cell wall binding is a prerequisite for cell lysis. The polypeptide is Endolysin PlyC, small cell-wall binding subunit (orf9dod) (Streptococcus phage C1).